The chain runs to 132 residues: Long-chain acyl-CoA thioesterase FadM (132 aa).

D13 is an active-site residue.

Belongs to the 4-hydroxybenzoyl-CoA thioesterase family. In terms of assembly, homotetramer.

The enzyme catalyses (3E,5Z)-tetradecadienoyl-CoA + H2O = (3E,5Z)-tetradecadienoate + CoA + H(+). It catalyses the reaction (3E,5Z)-dodecadienoyl-CoA + H2O = (3E,5Z)-dodecadienoate + CoA + H(+). The catalysed reaction is (9Z)-octadecenoyl-CoA + H2O = (9Z)-octadecenoate + CoA + H(+). It carries out the reaction octadecanoyl-CoA + H2O = octadecanoate + CoA + H(+). The enzyme catalyses hexadecanoyl-CoA + H2O = hexadecanoate + CoA + H(+). It catalyses the reaction (3S)-hydroxytetradecanoyl-CoA + H2O = (3S)-hydroxytetradecanoate + CoA + H(+). The catalysed reaction is tetradecanoyl-CoA + H2O = tetradecanoate + CoA + H(+). Long-chain acyl-CoA thioesterase that could be involved in beta-oxidation of fatty acids. Is most active with 3,5-tetradecadienoyl-CoA, a metabolite of oleic acid that is hydrolyzed during oleate beta-oxidation, but can also use other substrates such as 3,5-dodecadienoyl-CoA, 9-cis-octadecenoyl-CoA, octadecanoyl-CoA, hexadecanoyl-CoA, 3-hydroxytetradecanoyl-CoA and tetradecanoyl-CoA. The polypeptide is Long-chain acyl-CoA thioesterase FadM (Escherichia coli (strain K12)).